Consider the following 144-residue polypeptide: Mercuric transport protein MerC (144 aa).

Over 1 to 21 (MSAITRIIDKIGIVGTIVGSF) the chain is Cytoplasmic. The chain crosses the membrane as a helical span at residues 22–42 (SCAMCFPAAASLGAAIGLGFL). Hg(2+) contacts are provided by Cys23 and Cys26. Topologically, residues 43–46 (SQWE) are periplasmic. A helical transmembrane segment spans residues 47–67 (GLFVQWLIPIFASVALLATLA). The Cytoplasmic portion of the chain corresponds to 68–78 (GWFSHRQWQRT). The chain crosses the membrane as a helical span at residues 79 to 99 (LLGSIGPVLALVGVFGLTHHF). At 100–103 (LDKD) the chain is on the periplasmic side. The chain crosses the membrane as a helical span at residues 104–124 (LARVIFYTGLVVMFLVSIWDM). Residues 125-144 (VNPANRRCATDGCETPAPRS) are Cytoplasmic-facing.

Monomer.

The protein localises to the cell inner membrane. Its activity is regulated as follows. Inhibited by the thiol-modifying reagent N-ethylmaleimide (NEM). Functionally, involved in mercuric ion uptake. The sequence is that of Mercuric transport protein MerC from Acidithiobacillus ferrooxidans (Thiobacillus ferrooxidans).